A 348-amino-acid polypeptide reads, in one-letter code: MKNTFNTSNVFANAYSFWGYVIGFILSTSNRLYIGWFGILMFPLLVLATVAYIAAFIFAPPVDIDGIREPVAGALLYGNNIISGAVIPSSNAIGVHFYPVWEALGFDEWLYNGGTYQFVVLHFILGAGAYMGREWEFAFRLGMRPWIFVAFSAPLVAASAVFIVYPIGQGSFSDGMPLGISGTFNFMLVFQAEHNILMHPFHILGVAAVFGGSLFSAMHGSLVTSSLVAETAGDLSLNVGYNFGQEDETYSISAAHGYFGRLIFQYASFNNSRSLHFFLAAWPVIGIWFTALGVSTMAFNLNGLNFNQSIIDSSGHLINSWADIVNRADLGMEVMHERNAHNFPLDLA.

Transmembrane regions (helical) follow at residues 33–50, 122–137, and 146–160; these read YIGW…LATV, HFIL…EWEF, and WIFV…AASA. Histidine 122 is a chlorophyll a binding site. Position 130 (tyrosine 130) interacts with pheophytin a. Aspartate 174 and glutamate 193 together coordinate [CaMn4O5] cluster. A helical transmembrane segment spans residues 201-222; it reads FHILGVAAVFGGSLFSAMHGSL. Histidine 202 is a chlorophyll a binding site. A quinone is bound by residues histidine 219 and 268–269; that span reads SF. Histidine 219 is a Fe cation binding site. Histidine 276 provides a ligand contact to Fe cation. Residues 278–292 traverse the membrane as a helical segment; it reads FLAAWPVIGIWFTAL. [CaMn4O5] cluster is bound by residues histidine 336, glutamate 337, aspartate 346, and alanine 348.

This sequence belongs to the reaction center PufL/M/PsbA/D family. In terms of assembly, PSII is composed of 1 copy each of membrane proteins PsbA, PsbB, PsbC, PsbD, PsbE, PsbF, PsbH, PsbI, PsbJ, PsbK, PsbL, PsbM, PsbT, PsbX, PsbY, PsbZ, Psb30/Ycf12, at least 3 peripheral proteins of the oxygen-evolving complex and a large number of cofactors. It forms dimeric complexes. The cofactor is The D1/D2 heterodimer binds P680, chlorophylls that are the primary electron donor of PSII, and subsequent electron acceptors. It shares a non-heme iron and each subunit binds pheophytin, quinone, additional chlorophylls, carotenoids and lipids. D1 provides most of the ligands for the Mn4-Ca-O5 cluster of the oxygen-evolving complex (OEC). There is also a Cl(-1) ion associated with D1 and D2, which is required for oxygen evolution. The PSII complex binds additional chlorophylls, carotenoids and specific lipids.. Tyr-165 forms a radical intermediate that is referred to as redox-active TyrZ, YZ or Y-Z.

Its subcellular location is the plastid. The protein localises to the chloroplast thylakoid membrane. The catalysed reaction is 2 a plastoquinone + 4 hnu + 2 H2O = 2 a plastoquinol + O2. Photosystem II (PSII) is a light-driven water:plastoquinone oxidoreductase that uses light energy to abstract electrons from H(2)O, generating O(2) and a proton gradient subsequently used for ATP formation. It consists of a core antenna complex that captures photons, and an electron transfer chain that converts photonic excitation into a charge separation. The D1/D2 (PsbA/PsbD) reaction center heterodimer binds P680, the primary electron donor of PSII as well as several subsequent electron acceptors. The sequence is that of Photosystem II protein D1 from Heterocapsa pygmaea (Dinoflagellate).